The sequence spans 709 residues: Nucleobase-ascorbate transporter 12 (709 aa).

The tract at residues Met-1 to Gly-145 is disordered. Residues Lys-7–Pro-19 show a composition bias toward pro residues. Phosphoserine is present on Ser-40. Residues Gly-41–Leu-53 show a composition bias toward polar residues. Basic and acidic residues-rich tracts occupy residues Glu-89–Pro-98 and Gln-113–Asp-122. The next 12 helical transmembrane spans lie at Tyr-190–Gly-210, Val-218–Ser-238, Leu-240–Ser-260, Ile-283–Leu-303, Pro-308–Pro-328, Leu-329–Leu-349, Ile-361–Leu-381, Trp-438–Ala-458, Gly-530–Ile-550, Pro-551–Leu-571, Ile-585–Tyr-605, and Tyr-639–Leu-659.

This sequence belongs to the nucleobase:cation symporter-2 (NCS2) (TC 2.A.40) family. In terms of tissue distribution, ubiquitous.

It localises to the cell membrane. This Arabidopsis thaliana (Mouse-ear cress) protein is Nucleobase-ascorbate transporter 12 (NAT12).